The sequence spans 135 residues: Cilia- and flagella-associated protein 144 (135 aa).

Positions 76–100 are disordered; the sequence is QGPKKKYSETQTEAQEIGWDPNPLI.

The protein belongs to the CFAP144 family. As to quaternary structure, microtubule inner protein component of sperm flagellar doublet microtubules. As to expression, predominantly expressed in tissues containing motile cilia.

It localises to the cytoplasm. The protein resides in the cytoskeleton. Its subcellular location is the cilium axoneme. The protein localises to the flagellum axoneme. In Mus musculus (Mouse), this protein is Cilia- and flagella-associated protein 144.